We begin with the raw amino-acid sequence, 436 residues long: 3-ketoacyl-CoA thiolase (436 aa).

The active-site Acyl-thioester intermediate is cysteine 99. Active-site proton acceptor residues include histidine 392 and cysteine 422.

Belongs to the thiolase-like superfamily. Thiolase family. In terms of assembly, heterotetramer of two alpha chains (FadJ) and two beta chains (FadI).

It localises to the cytoplasm. The enzyme catalyses an acyl-CoA + acetyl-CoA = a 3-oxoacyl-CoA + CoA. It functions in the pathway lipid metabolism; fatty acid beta-oxidation. Its function is as follows. Catalyzes the final step of fatty acid oxidation in which acetyl-CoA is released and the CoA ester of a fatty acid two carbons shorter is formed. The sequence is that of 3-ketoacyl-CoA thiolase from Shewanella piezotolerans (strain WP3 / JCM 13877).